We begin with the raw amino-acid sequence, 361 residues long: MKDSVIRKLEGLLERNEEVLALLSDASIIADQERFRALSKEYSQLEDVVRTFKSYQQAEEDFESAKEMMEEDDPELKEMAQEEYKATKEAIATLEAELQILLLPKDPNDDNNCFIEIRAGAGGDEAAIFAGDLFRMYSRYAESKRWQIEVMNTNEGEHGGFKEVIAKISGEGVYGKLKFESGGHRVQRVPETESQGRVHTSACTVIVLPEVPEAEAIEINKADLKVDTFRASGAGGQHVNKTDSAIRITHIPTGIVVECQDQRSQHKNRAQAMSVLAARIQAVEDEKRRSAEESTRRNLVSSGDRSERIRTYNYPQGRVSEHRINLTLYRLNEFMEGDIDCVVEPLIQENQADMLAALGEA.

N5-methylglutamine is present on Gln-237. The segment covering 285-296 (DEKRRSAEESTR) has biased composition (basic and acidic residues). The interval 285–305 (DEKRRSAEESTRRNLVSSGDR) is disordered.

Belongs to the prokaryotic/mitochondrial release factor family. Methylated by PrmC. Methylation increases the termination efficiency of RF1.

The protein localises to the cytoplasm. Its function is as follows. Peptide chain release factor 1 directs the termination of translation in response to the peptide chain termination codons UAG and UAA. The polypeptide is Peptide chain release factor 1 (Shewanella halifaxensis (strain HAW-EB4)).